We begin with the raw amino-acid sequence, 393 residues long: L-methionine gamma-lyase (393 aa).

Pyridoxal 5'-phosphate-binding positions include 63-65 (YQR) and 93-94 (GM). Residue Tyr119 participates in L-homocysteine binding. A pyridoxal 5'-phosphate-binding site is contributed by 206–208 (SAT). N6-(pyridoxal phosphate)lysine is present on Lys209. Residue Arg367 coordinates L-homocysteine. Position 367 (Arg367) interacts with L-methionine.

The protein belongs to the trans-sulfuration enzymes family. L-methionine gamma-lyase subfamily. As to quaternary structure, homotetramer. Requires pyridoxal 5'-phosphate as cofactor.

The catalysed reaction is L-methionine + H2O = methanethiol + 2-oxobutanoate + NH4(+). It carries out the reaction L-homocysteine + H2O = 2-oxobutanoate + hydrogen sulfide + NH4(+) + H(+). Catalyzes the alpha,gamma-elimination of L-methionine to produce methanethiol, 2-oxobutanoate and ammonia. Is also able to catalyze the alpha,gamma-elimination of L-homocysteine. This chain is L-methionine gamma-lyase, found in Brevibacterium sandarakinum.